The primary structure comprises 252 residues: uncharacterized protein (252 aa).

The Clp R domain occupies 96 to 238 (FRRFTPRARN…ITTLASLTGA (143 aa)). Repeat regions lie at residues 99–164 (FTPR…PAVT) and 172–238 (FSGP…LTGA).

The protein belongs to the ClpA/ClpB family. ClpC subfamily.

This is an uncharacterized protein from Mycobacterium bovis (strain ATCC BAA-935 / AF2122/97).